Reading from the N-terminus, the 280-residue chain is Putative transcription factor kapC (280 aa).

The interval methionine 1 to arginine 102 is disordered. The segment covering proline 39–methionine 49 has biased composition (pro residues). A compositionally biased stretch (polar residues) spans threonine 79 to proline 89. A bZIP domain is found at proline 96–leucine 159. The basic motif stretch occupies residues leucine 97 to histidine 120. Residues leucine 124–leucine 155 are leucine-zipper. A disordered region spans residues leucine 169–serine 280. Positions alanine 197–alanine 211 are enriched in pro residues.

The protein belongs to the bZIP family.

It localises to the nucleus. Putative transcription factor. This chain is Putative transcription factor kapC (kapC), found in Neosartorya fischeri (strain ATCC 1020 / DSM 3700 / CBS 544.65 / FGSC A1164 / JCM 1740 / NRRL 181 / WB 181) (Aspergillus fischerianus).